A 354-amino-acid chain; its full sequence is Uroporphyrinogen decarboxylase (354 aa).

Substrate-binding positions include 27 to 31 (RQAGR), Asp77, Tyr154, Thr209, and His327.

Belongs to the uroporphyrinogen decarboxylase family. In terms of assembly, homodimer.

The protein localises to the cytoplasm. It catalyses the reaction uroporphyrinogen III + 4 H(+) = coproporphyrinogen III + 4 CO2. Its pathway is porphyrin-containing compound metabolism; protoporphyrin-IX biosynthesis; coproporphyrinogen-III from 5-aminolevulinate: step 4/4. Functionally, catalyzes the decarboxylation of four acetate groups of uroporphyrinogen-III to yield coproporphyrinogen-III. The chain is Uroporphyrinogen decarboxylase from Escherichia coli (strain 55989 / EAEC).